A 286-amino-acid chain; its full sequence is Mitochondrial dicarboxylate carrier (286 aa).

3 Solcar repeats span residues 7–87 (SRWY…MRDY), 100–187 (SKVL…AKQL), and 196–279 (DNIF…LRKH). The next 3 helical transmembrane spans lie at 9-29 (WYFG…LDLL), 62-81 (GLSA…FAIY), and 102-122 (VLLG…ADLV). An N6-acetyllysine modification is found at K158. Transmembrane regions (helical) follow at residues 162–181 (GATM…LSCY), 202–222 (FLSS…LDVL), and 254–274 (GLVP…MFLE).

Belongs to the mitochondrial carrier (TC 2.A.29) family. As to expression, expressed most strongly in liver, then kidney, and at lower levels in heart and brain.

It localises to the mitochondrion inner membrane. The enzyme catalyses (S)-malate(in) + phosphate(out) = (S)-malate(out) + phosphate(in). It carries out the reaction malonate(out) + (S)-malate(in) = malonate(in) + (S)-malate(out). The catalysed reaction is (S)-malate(in) + succinate(out) = (S)-malate(out) + succinate(in). It catalyses the reaction (S)-malate(in) + sulfate(out) = (S)-malate(out) + sulfate(in). The enzyme catalyses malonate(out) + phosphate(in) = malonate(in) + phosphate(out). It carries out the reaction succinate(out) + phosphate(in) = succinate(in) + phosphate(out). The catalysed reaction is sulfate(out) + phosphate(in) = sulfate(in) + phosphate(out). It catalyses the reaction malonate(out) + succinate(in) = malonate(in) + succinate(out). Its function is as follows. Catalyzes the electroneutral exchange or flux of physiologically important metabolites such as dicarboxylates (malonate, malate, succinate), inorganic sulfur-containing anions, and phosphate, across mitochondrial inner membrane. Plays an important role in gluconeogenesis, fatty acid metabolism, urea synthesis, and sulfur metabolism, particularly in liver, by supplying the substrates for the different metabolic processes. Regulates fatty acid release from adipocytes, and contributes to systemic insulin sensitivity. The chain is Mitochondrial dicarboxylate carrier from Rattus norvegicus (Rat).